Consider the following 37-residue polypeptide: Large ribosomal subunit protein bL36c (37 aa).

The protein belongs to the bacterial ribosomal protein bL36 family.

The protein resides in the plastid. The protein localises to the chloroplast. This Adiantum capillus-veneris (Maidenhair fern) protein is Large ribosomal subunit protein bL36c.